The chain runs to 267 residues: Low affinity immunoglobulin gamma Fc region receptor III (267 aa).

A signal peptide spans 1-36 (MTLETQMFQNAHSGSQWLLPPLTMLLLFAFADRQTA). Residues 37–221 (NLPKAVVKRD…STSSLVWFHA (185 aa)) lie on the Extracellular side of the membrane. Ig-like C2-type domains are found at residues 39–121 (PKAV…EVIS) and 122–204 (DWLL…VTIT). 2 disulfide bridges follow: Cys-62–Cys-104 and Cys-143–Cys-187. 5 N-linked (GlcNAc...) asparagine glycosylation sites follow: Asn-70, Asn-78, Asn-97, Asn-171, and Asn-178. The chain crosses the membrane as a helical span at residues 222 to 241 (AFCLVMCLLFAVDTGLYFCV). The Cytoplasmic portion of the chain corresponds to 242-267 (RRNLQTSGEDWRKSLSVGKYKAPQDK).

In terms of assembly, may form multisubunit complex with other heteroproteins. This association is required for efficient cell-surface expression. Does not associate with CD3 zeta. Expressed on natural killer cells and macrophages.

The protein resides in the cell membrane. In terms of biological role, receptor for the Fc region of complexed immunoglobulins gamma. Low affinity receptor which binds to IgG1, IgG2a and IgG2b. Mediates neutrophil activation by IgG complexes redundantly with Fcgr4. The protein is Low affinity immunoglobulin gamma Fc region receptor III (Fcgr3) of Rattus norvegicus (Rat).